The sequence spans 1037 residues: Ephrin type-A receptor 5 (1037 aa).

An N-terminal signal peptide occupies residues 1–24; sequence MRGSGPRGAGRRRPPSGGGDTPIT. A disordered region spans residues 1–24; sequence MRGSGPRGAGRRRPPSGGGDTPIT. Residues 25–573 lie on the Extracellular side of the membrane; the sequence is PASLAGCYSA…AASSDQSQIP (549 aa). The region spanning 60–238 is the Eph LBD domain; that stretch reads EVNLLDSRTV…YYKKCPSVVR (179 aa). Residues Asn264, Asn299, Asn369, Asn423, Asn436, and Asn461 are each glycosylated (N-linked (GlcNAc...) asparagine). Fibronectin type-III domains follow at residues 357-467 and 468-562; these read PPSA…TNQA and APSP…TTPV. A helical transmembrane segment spans residues 574–594; that stretch reads VIAVSVTVGVILLAVVIGVLL. Residues 595-1037 are Cytoplasmic-facing; the sequence is SGSCCECGCG…VQLVNGMVPL (443 aa). Phosphotyrosine; by autocatalysis occurs at positions 650 and 656. Positions 675-936 constitute a Protein kinase domain; that stretch reads ITIERVIGAG…EIVNMLDKLI (262 aa). ATP is bound by residues 681–689 and Lys707; that span reads IGAGEFGEV. The Proton acceptor role is filled by Asp800. Tyr833 and Tyr982 each carry phosphotyrosine; by autocatalysis. Residues 965–1029 enclose the SAM domain; that stretch reads GAYRSVGEWL…MNSLQEMKVQ (65 aa). The short motif at 1035 to 1037 is the PDZ-binding element; it reads VPL.

This sequence belongs to the protein kinase superfamily. Tyr protein kinase family. Ephrin receptor subfamily. As to quaternary structure, heterotetramer upon binding of the ligand. The heterotetramer is composed of an ephrin dimer and a receptor dimer. Oligomerization is probably required to induce biological responses. Interacts (via SAM domain) with SAMD5 (via SAM domain). Phosphorylated. Phosphorylation is stimulated by the ligand EFNA5. Dephosphorylation upon stimulation by glucose, inhibits EPHA5 forward signaling and results in insulin secretion. As to expression, almost exclusively expressed in the nervous system in cortical neurons, cerebellar Purkinje cells and pyramidal neurons within the cortex and hippocampus. Display an increasing gradient of expression from the forebrain to hindbrain and spinal cord.

It localises to the cell membrane. It is found in the cell projection. The protein localises to the axon. The protein resides in the dendrite. It catalyses the reaction L-tyrosyl-[protein] + ATP = O-phospho-L-tyrosyl-[protein] + ADP + H(+). Functionally, receptor tyrosine kinase which binds promiscuously GPI-anchored ephrin-A family ligands residing on adjacent cells, leading to contact-dependent bidirectional signaling into neighboring cells. The signaling pathway downstream of the receptor is referred to as forward signaling while the signaling pathway downstream of the ephrin ligand is referred to as reverse signaling. Among GPI-anchored ephrin-A ligands, EFNA5 most probably constitutes the cognate/functional ligand for EPHA5. Functions as an axon guidance molecule during development and may be involved in the development of the retinotectal, entorhino-hippocampal and hippocamposeptal pathways. Together with EFNA5 plays also a role in synaptic plasticity in adult brain through regulation of synaptogenesis. In addition to its function in the nervous system, the interaction of EPHA5 with EFNA5 mediates communication between pancreatic islet cells to regulate glucose-stimulated insulin secretion. The protein is Ephrin type-A receptor 5 (EPHA5) of Homo sapiens (Human).